Here is a 383-residue protein sequence, read N- to C-terminus: Aquaporin-5 (383 aa).

Topologically, residues 1–46 (MSVTTLNGQPTLNISGPGQTALSRLDPLKKVFTKFFSSIPQKVRGH) are cytoplasmic. The chain crosses the membrane as a helical span at residues 47–67 (VVAVIGELIGTTAFLFIAFSA). The Extracellular portion of the chain corresponds to 68–93 (AEVALASANDNKGDKVSYETKSISTT). A helical membrane pass occupies residues 94-114 (QILFIAFGAGISLVVNAWTFF). Arg-115 is a topological domain (cytoplasmic). A helical membrane pass occupies residues 116–136 (ISGGLFDPAVSIALFFVGAID). The NPA 1 motif lies at 122–124 (DPA). Topologically, residues 137-140 (LTRC) are extracellular. A helical membrane pass occupies residues 141-161 (VLLCIAQCLGAIAASAMAYGL). Over 162-180 (YHGGLHTATTLKPGMSPAQ) the chain is Cytoplasmic. Residues 181–201 (GVIVEMILTCQLCFTVLMLAA) traverse the membrane as a helical segment. Over 202 to 207 (EKHEAT) the chain is Extracellular. A helical transmembrane segment spans residues 208 to 228 (FLAPLGIGLSVFIGELAGVFW). Topologically, residues 229-252 (TGGSMNPARSLGPAVVTLSFPSYH) are cytoplasmic. The NPA 2 signature appears at 234 to 236 (NPA). The chain crosses the membrane as a helical span at residues 253–273 (WIYWVGPIAGAGLASIIYKLI). Topologically, residues 274–383 (KALEYETAQL…DGFFGEMYAD (110 aa)) are extracellular. Over residues 332 to 349 (ARKSSSLVPTKSTKSGNS) the composition is skewed to polar residues. Positions 332 to 383 (ARKSSSLVPTKSTKSGNSEVKKTETVVEEPAKTQPKPAPAADDGFFGEMYAD) are disordered. The span at 350 to 362 (EVKKTETVVEEPA) shows a compositional bias: basic and acidic residues. The span at 363-372 (KTQPKPAPAA) shows a compositional bias: low complexity.

Belongs to the MIP/aquaporin (TC 1.A.8) family.

The protein resides in the membrane. It catalyses the reaction H2O(in) = H2O(out). Its function is as follows. Water channel required to facilitate the transport of water across membranes. May play a role in the vegetative growth. This is Aquaporin-5 from Botryotinia fuckeliana (strain B05.10) (Noble rot fungus).